A 359-amino-acid chain; its full sequence is Serpentine receptor class epsilon-33 (359 aa).

Transmembrane regions (helical) follow at residues 29-49 (VIIS…VNVS), 65-85 (ILAL…FITI), 134-156 (YMYS…SVLI), 168-188 (PAIL…GLLF), 194-214 (LSAH…YVFV), 255-275 (LVFA…ALHY), and 285-305 (LIEN…MLSI).

This sequence belongs to the nematode receptor-like protein sre family.

Its subcellular location is the membrane. This chain is Serpentine receptor class epsilon-33 (sre-33), found in Caenorhabditis elegans.